The following is a 313-amino-acid chain: Olfactory receptor 4E2 (313 aa).

The Extracellular segment spans residues 1–25 (MDSLNQTRVTEFVFLGLTDNRVLEM). Residue Asn-5 is glycosylated (N-linked (GlcNAc...) asparagine). Residues 26–49 (LFFMAFSAIYMLTLSGNILIIIAT) form a helical membrane-spanning segment. Over 50–57 (VFTPSLHT) the chain is Cytoplasmic. Residues 58-79 (PMYFFLSNLSFIDICHSSVTVP) form a helical membrane-spanning segment. Residues 80-100 (KMLEGLLLERKTISFDNCITQ) are Extracellular-facing. Cys-97 and Cys-179 are disulfide-bonded. Residues 101–120 (LFFLHLFACAEIFLLIIVAY) traverse the membrane as a helical segment. Residues His-105 and Cys-109 each coordinate Cu cation. The Cytoplasmic segment spans residues 121-139 (DRYVAICTPLHYPNVMNMR). A helical transmembrane segment spans residues 140–158 (VCIQLVFALWLGGTVHSLG). Over 159-195 (QTFLTIRLPYCGPNIIDSYFCDVPLVIKLACTDTYLT) the chain is Extracellular. Residues 196–219 (GILIVTNSGTISLSCFLAVVTSYM) traverse the membrane as a helical segment. The Cytoplasmic portion of the chain corresponds to 220–235 (VILVSLRKHSAEGRQK). The chain crosses the membrane as a helical span at residues 236 to 258 (ALSTCSAHFMVVALFFGPCIFIY). At 259-269 (TRPDTSFSIDK) the chain is on the extracellular side. Residue Arg-260 participates in Cu cation binding. Residues 270 to 289 (VVSVFYTVVTPLLNPFIYTL) form a helical membrane-spanning segment. At 290–313 (RNEEVKSAMKQLRQRQVFFTKSYT) the chain is on the cytoplasmic side.

It belongs to the G-protein coupled receptor 1 family.

It localises to the cell membrane. With respect to regulation, copper binding enhances receptor activity in response to odorant binding. In terms of biological role, olfactory receptor that is activated by the binding of organosulfur odorants with thioether groups such as (methylthio)methanethiol (MTMT) and bis(methylthiomethyl) disulfide. Also binds odorants cis-cyclooctene and tert-butyl mercaptan. The activity of this receptor is mediated by G proteins which activate adenylyl cyclase. The polypeptide is Olfactory receptor 4E2 (Homo sapiens (Human)).